Consider the following 256-residue polypeptide: Small ribosomal subunit protein uS2 (256 aa).

Positions N104–L149 form a coiled coil.

This sequence belongs to the universal ribosomal protein uS2 family. As to quaternary structure, part of the 30S ribosomal subunit. Contacts protein S8.

Its function is as follows. Spans the head-body hinge region of the 30S subunit. Is loosely associated with the 30S subunit. In Thermus thermophilus (strain ATCC BAA-163 / DSM 7039 / HB27), this protein is Small ribosomal subunit protein uS2 (rpsB).